Here is a 367-residue protein sequence, read N- to C-terminus: Putative zinc metalloprotease mll0638 (367 aa).

Histidine 20 contributes to the Zn(2+) binding site. Glutamate 21 is a catalytic residue. Histidine 24 lines the Zn(2+) pocket. The next 3 membrane-spanning stretches (helical) occupy residues 108–130, 291–313, and 343–365; these read ATVV…VLFA, LGFE…LNLL, and MAYR…NDLF. In terms of domain architecture, PDZ spans 121–196; sequence TIVVFSVLFA…ITFVMLRDGK (76 aa).

It belongs to the peptidase M50B family. Zn(2+) serves as cofactor.

The protein localises to the cell inner membrane. The polypeptide is Putative zinc metalloprotease mll0638 (Mesorhizobium japonicum (strain LMG 29417 / CECT 9101 / MAFF 303099) (Mesorhizobium loti (strain MAFF 303099))).